The chain runs to 288 residues: 4-diphosphocytidyl-2-C-methyl-D-erythritol kinase (288 aa).

Lysine 13 is an active-site residue. 96-106 is a binding site for ATP; that stretch reads PIGGGIGGGSS. Residue aspartate 138 is part of the active site.

Belongs to the GHMP kinase family. IspE subfamily.

It catalyses the reaction 4-CDP-2-C-methyl-D-erythritol + ATP = 4-CDP-2-C-methyl-D-erythritol 2-phosphate + ADP + H(+). The protein operates within isoprenoid biosynthesis; isopentenyl diphosphate biosynthesis via DXP pathway; isopentenyl diphosphate from 1-deoxy-D-xylulose 5-phosphate: step 3/6. Catalyzes the phosphorylation of the position 2 hydroxy group of 4-diphosphocytidyl-2C-methyl-D-erythritol. The chain is 4-diphosphocytidyl-2-C-methyl-D-erythritol kinase from Aliivibrio salmonicida (strain LFI1238) (Vibrio salmonicida (strain LFI1238)).